A 224-amino-acid chain; its full sequence is MTDARQRLRLMQLASSSLPVGSFTWSQGLEWAVEIGWVKNAEDFAHWQTQQLEQNFFTVDLPIFARLYHACERNDVTAARRWSAYLLACRETRELREEERSRGAAFTRLVVDWVPDCPQTWRPLFANSQLCGMAWLGVRWRIPLTDLALSLGYSWLESAVMAGVKLVPFGQQAAQQLILSLCDHYAQGMAQALARPDADLGSSTPLAAIASARHETQYCRLFRS.

This sequence belongs to the UreF family. UreD, UreF and UreG form a complex that acts as a GTP-hydrolysis-dependent molecular chaperone, activating the urease apoprotein by helping to assemble the nickel containing metallocenter of UreC. The UreE protein probably delivers the nickel.

It is found in the cytoplasm. Functionally, required for maturation of urease via the functional incorporation of the urease nickel metallocenter. This is Urease accessory protein UreF from Citrobacter koseri (strain ATCC BAA-895 / CDC 4225-83 / SGSC4696).